The sequence spans 344 residues: MLEQTDLSLEQLLKNYYETTNEKIVFVNRQGKIIAMNDAAKDILTEEDNYNAMTNAICHRCEGYSNEYDVQSCKDCFLETTQLQHSNFQVFMKTKDNEIKPFTAMYQNIDEQRGISAFTLQNVAPQIERQEKMYQQKMLHRSIQAQENERKRISRELHDSVIQDMLNIDVELRLLKYKHRDKVLAETSQRIEGLLSQLIDDIRNMSVELRPSSLDDLGIEAAFKSYFKQFEENYGMHIKYDSNIKGMRFDNEIETVVYRVVQEGVFNALKYAEVNEIEVSTHSDGKQIVAEVVDRGKGFSLDHHPKGSGLGLYGMRERAELVNGHVNIETHINRGTIITLDIPI.

C58, C61, C73, and C76 together coordinate [4Fe-4S] cluster. In terms of domain architecture, Histidine kinase spans 147-344; it reads ENERKRISRE…GTIITLDIPI (198 aa). Residue H158 is modified to Phosphohistidine; by autocatalysis.

[4Fe-4S] cluster is required as a cofactor. Post-translationally, autophosphorylated.

The protein localises to the cytoplasm. It carries out the reaction ATP + protein L-histidine = ADP + protein N-phospho-L-histidine.. Member of the two-component regulatory system NreB/NreC involved in the control of dissimilatory nitrate/nitrite reduction in response to oxygen. NreB functions as a direct oxygen sensor histidine kinase which is autophosphorylated, in the absence of oxygen, probably at the conserved histidine residue, and transfers its phosphate group probably to a conserved aspartate residue of NreC. NreB/NreC activates the expression of the nitrate (narGHJI) and nitrite (nir) reductase operons, as well as the putative nitrate transporter gene narT. The chain is Oxygen sensor histidine kinase NreB (nreB) from Staphylococcus epidermidis (strain ATCC 35984 / DSM 28319 / BCRC 17069 / CCUG 31568 / BM 3577 / RP62A).